We begin with the raw amino-acid sequence, 175 residues long: ATP synthase subunit b (175 aa).

The chain crosses the membrane as a helical span at residues 23 to 43; it reads TGITFLVLLFVLGKFAWGPIV.

It belongs to the ATPase B chain family. In terms of assembly, F-type ATPases have 2 components, F(1) - the catalytic core - and F(0) - the membrane proton channel. F(1) has five subunits: alpha(3), beta(3), gamma(1), delta(1), epsilon(1). F(0) has three main subunits: a(1), b(2) and c(10-14). The alpha and beta chains form an alternating ring which encloses part of the gamma chain. F(1) is attached to F(0) by a central stalk formed by the gamma and epsilon chains, while a peripheral stalk is formed by the delta and b chains.

It is found in the cell inner membrane. F(1)F(0) ATP synthase produces ATP from ADP in the presence of a proton or sodium gradient. F-type ATPases consist of two structural domains, F(1) containing the extramembraneous catalytic core and F(0) containing the membrane proton channel, linked together by a central stalk and a peripheral stalk. During catalysis, ATP synthesis in the catalytic domain of F(1) is coupled via a rotary mechanism of the central stalk subunits to proton translocation. In terms of biological role, component of the F(0) channel, it forms part of the peripheral stalk, linking F(1) to F(0). In Anaeromyxobacter sp. (strain Fw109-5), this protein is ATP synthase subunit b.